The chain runs to 833 residues: Bifunctional dethiobiotin synthetase/7,8-diamino-pelargonic acid aminotransferase, mitochondrial (833 aa).

Residues 1–23 (MIPVTATLIRHRLRHLRHRIRFK) constitute a mitochondrion transit peptide. The tract at residues 36 to 299 (HPTYLIWSAN…VLVLPPVPKD (264 aa)) is dethiobiotin synthetase. An ATP-binding site is contributed by 47 to 52 (SLGKTL). Mg(2+) is bound at residue Thr-51. Thr-81 contacts substrate. Asp-88 lines the Mg(2+) pocket. ATP contacts are provided by residues Asp-97, 210–213 (ETAG), and 270–271 (ED). Glu-210 provides a ligand contact to Mg(2+). The tract at residues 332-830 (RLNGMAKLAG…TKLYKRLGEF (499 aa)) is 7,8-diamino-pelargonic acid aminotransferase. 391 to 392 (WW) contributes to the (8S)-8-amino-7-oxononanoate binding site. Pyridoxal 5'-phosphate is bound at residue 453–454 (GS). Tyr-495 is a (8S)-8-amino-7-oxononanoate binding site. ATP-binding positions include 518-520 (PWY) and Glu-545. Asp-637 is a binding site for pyridoxal 5'-phosphate. (8S)-8-amino-7-oxononanoate contacts are provided by Lys-666 and Gly-700. An N6-(pyridoxal phosphate)lysine modification is found at Lys-666. Residue 701–702 (HS) participates in pyridoxal 5'-phosphate binding. Arg-797 is a (8S)-8-amino-7-oxononanoate binding site.

It in the N-terminal section; belongs to the dethiobiotin synthetase family. The protein in the C-terminal section; belongs to the class-III pyridoxal-phosphate-dependent aminotransferase family. BioA subfamily. As to quaternary structure, homodimer. Requires Mg(2+) as cofactor. It depends on pyridoxal 5'-phosphate as a cofactor.

The protein localises to the mitochondrion matrix. It catalyses the reaction (7R,8S)-7,8-diammoniononanoate + CO2 + ATP = (4R,5S)-dethiobiotin + ADP + phosphate + 3 H(+). The enzyme catalyses (8S)-8-amino-7-oxononanoate + S-adenosyl-L-methionine = S-adenosyl-4-methylsulfanyl-2-oxobutanoate + (7R,8S)-7,8-diammoniononanoate. It functions in the pathway cofactor biosynthesis; biotin biosynthesis; biotin from 7,8-diaminononanoate: step 1/2. The protein operates within cofactor biosynthesis; biotin biosynthesis; 7,8-diaminononanoate from 8-amino-7-oxononanoate (SAM route): step 1/1. In terms of biological role, bifunctional enzyme that catalyzes two different reactions involved in the biotin biosynthesis. Functionally, catalyzes a mechanistically unusual reaction, the ATP-dependent insertion of CO2 between the N7 and N8 nitrogen atoms of 7,8-diaminopelargonic acid (DAPA) to form an ureido ring. Catalyzes the transfer of the alpha-amino group from S-adenosyl-L-methionine (SAM) to 7-keto-8-aminopelargonic acid (KAPA) to form 7,8-diaminopelargonic acid (DAPA). It is the only aminotransferase known to utilize SAM as an amino donor. The sequence is that of Bifunctional dethiobiotin synthetase/7,8-diamino-pelargonic acid aminotransferase, mitochondrial from Arabidopsis thaliana (Mouse-ear cress).